Here is a 208-residue protein sequence, read N- to C-terminus: Guanylate kinase (208 aa).

The 182-residue stretch at 4–185 (GNLYILSAPS…TLKDLQSILQ (182 aa)) folds into the Guanylate kinase-like domain. 11–18 (APSGAGKS) lines the ATP pocket.

This sequence belongs to the guanylate kinase family.

Its subcellular location is the cytoplasm. It catalyses the reaction GMP + ATP = GDP + ADP. Its function is as follows. Essential for recycling GMP and indirectly, cGMP. The protein is Guanylate kinase of Haemophilus influenzae (strain 86-028NP).